A 65-amino-acid polypeptide reads, in one-letter code: Large ribosomal subunit protein bL35 (65 aa).

A compositionally biased stretch (basic residues) spans 1–26; the sequence is MPKIKTHRGAAKRFSKTGTGKIKRSH. Residues 1–41 are disordered; sequence MPKIKTHRGAAKRFSKTGTGKIKRSHAFTSHILTSKTRKNK.

The protein belongs to the bacterial ribosomal protein bL35 family.

The sequence is that of Large ribosomal subunit protein bL35 from Geotalea daltonii (strain DSM 22248 / JCM 15807 / FRC-32) (Geobacter daltonii).